Reading from the N-terminus, the 126-residue chain is Large ribosomal subunit protein bL12 (126 aa).

The protein belongs to the bacterial ribosomal protein bL12 family. As to quaternary structure, homodimer. Part of the ribosomal stalk of the 50S ribosomal subunit. Forms a multimeric L10(L12)X complex, where L10 forms an elongated spine to which 2 to 4 L12 dimers bind in a sequential fashion. Binds GTP-bound translation factors.

In terms of biological role, forms part of the ribosomal stalk which helps the ribosome interact with GTP-bound translation factors. Is thus essential for accurate translation. This Geobacter sp. (strain M21) protein is Large ribosomal subunit protein bL12.